The primary structure comprises 453 residues: Bifunctional protein GlmU (453 aa).

Residues Met-1–Arg-231 are pyrophosphorylase. UDP-N-acetyl-alpha-D-glucosamine is bound by residues Leu-10 to Gly-13, Lys-24, Gln-77, Gly-82 to Thr-83, Tyr-105 to Asp-107, Gly-143, Glu-157, Asn-172, and Asn-229. Mg(2+) is bound at residue Asp-107. A Mg(2+)-binding site is contributed by Asn-229. A linker region spans residues Ala-232–Ala-252. The segment at Gly-253–Ala-453 is N-acetyltransferase. The UDP-N-acetyl-alpha-D-glucosamine site is built by Arg-318 and Lys-336. The active-site Proton acceptor is His-348. UDP-N-acetyl-alpha-D-glucosamine-binding residues include Tyr-351 and Asn-362. Acetyl-CoA-binding positions include Ala-365, Asn-371–Tyr-372, Ser-390, Ser-408, and Arg-425.

In the N-terminal section; belongs to the N-acetylglucosamine-1-phosphate uridyltransferase family. This sequence in the C-terminal section; belongs to the transferase hexapeptide repeat family. As to quaternary structure, homotrimer. The cofactor is Mg(2+).

The protein localises to the cytoplasm. The enzyme catalyses alpha-D-glucosamine 1-phosphate + acetyl-CoA = N-acetyl-alpha-D-glucosamine 1-phosphate + CoA + H(+). It carries out the reaction N-acetyl-alpha-D-glucosamine 1-phosphate + UTP + H(+) = UDP-N-acetyl-alpha-D-glucosamine + diphosphate. It participates in nucleotide-sugar biosynthesis; UDP-N-acetyl-alpha-D-glucosamine biosynthesis; N-acetyl-alpha-D-glucosamine 1-phosphate from alpha-D-glucosamine 6-phosphate (route II): step 2/2. The protein operates within nucleotide-sugar biosynthesis; UDP-N-acetyl-alpha-D-glucosamine biosynthesis; UDP-N-acetyl-alpha-D-glucosamine from N-acetyl-alpha-D-glucosamine 1-phosphate: step 1/1. It functions in the pathway bacterial outer membrane biogenesis; LPS lipid A biosynthesis. Catalyzes the last two sequential reactions in the de novo biosynthetic pathway for UDP-N-acetylglucosamine (UDP-GlcNAc). The C-terminal domain catalyzes the transfer of acetyl group from acetyl coenzyme A to glucosamine-1-phosphate (GlcN-1-P) to produce N-acetylglucosamine-1-phosphate (GlcNAc-1-P), which is converted into UDP-GlcNAc by the transfer of uridine 5-monophosphate (from uridine 5-triphosphate), a reaction catalyzed by the N-terminal domain. This chain is Bifunctional protein GlmU, found in Rhizobium etli (strain CIAT 652).